We begin with the raw amino-acid sequence, 72 residues long: Translation initiation factor IF-1 (72 aa).

Residues 1 to 72 form the S1-like domain; it reads MSKTDVVEIE…TKGRIIWRDK (72 aa).

It belongs to the IF-1 family. Component of the 30S ribosomal translation pre-initiation complex which assembles on the 30S ribosome in the order IF-2 and IF-3, IF-1 and N-formylmethionyl-tRNA(fMet); mRNA recruitment can occur at any time during PIC assembly.

Its subcellular location is the cytoplasm. One of the essential components for the initiation of protein synthesis. Stabilizes the binding of IF-2 and IF-3 on the 30S subunit to which N-formylmethionyl-tRNA(fMet) subsequently binds. Helps modulate mRNA selection, yielding the 30S pre-initiation complex (PIC). Upon addition of the 50S ribosomal subunit IF-1, IF-2 and IF-3 are released leaving the mature 70S translation initiation complex. The protein is Translation initiation factor IF-1 of Lachnoclostridium phytofermentans (strain ATCC 700394 / DSM 18823 / ISDg) (Clostridium phytofermentans).